The following is a 137-amino-acid chain: DNA-binding protein H-NS (137 aa).

A DNA-binding region spans residues 112 to 117; that stretch reads QGRTPA.

It belongs to the histone-like protein H-NS family. As to quaternary structure, homodimer that oligomerizes on DNA into higher-order complexes that form bridges between disparate regions of DNA compacting it. Interacts with Hha, YdgT and StpA.

It is found in the cytoplasm. Its subcellular location is the nucleoid. Functionally, a DNA-binding protein implicated in transcriptional repression and chromosome organization and compaction. Binds nucleation sites in AT-rich DNA and bridges them, forming higher-order nucleoprotein complexes and condensing the chromosome. As many horizontally transferred genes are AT-rich, it plays a central role in silencing foreign genes. A subset of genes are repressed by H-NS in association with other proteins. This chain is DNA-binding protein H-NS (hns), found in Salmonella paratyphi A (strain ATCC 9150 / SARB42).